The chain runs to 96 residues: Phosphoribosyl-ATP pyrophosphatase (96 aa).

This sequence belongs to the PRA-PH family.

The protein localises to the cytoplasm. It carries out the reaction 1-(5-phospho-beta-D-ribosyl)-ATP + H2O = 1-(5-phospho-beta-D-ribosyl)-5'-AMP + diphosphate + H(+). Its pathway is amino-acid biosynthesis; L-histidine biosynthesis; L-histidine from 5-phospho-alpha-D-ribose 1-diphosphate: step 2/9. This is Phosphoribosyl-ATP pyrophosphatase from Methanococcus maripaludis (strain DSM 14266 / JCM 13030 / NBRC 101832 / S2 / LL).